Reading from the N-terminus, the 262-residue chain is Ribosomal RNA small subunit methyltransferase G (262 aa).

S-adenosyl-L-methionine contacts are provided by G72, L77, and R142. The interval 212-262 (RSSQLSRAEGRKGRGDGERHDGRQVRRTARDSRRSREVDRDQPTRGQSRST) is disordered. Positions 219 to 254 (AEGRKGRGDGERHDGRQVRRTARDSRRSREVDRDQP) are enriched in basic and acidic residues.

Belongs to the methyltransferase superfamily. RNA methyltransferase RsmG family.

It localises to the cytoplasm. Its function is as follows. Specifically methylates the N7 position of guanine in position 518 of 16S rRNA. In Frankia alni (strain DSM 45986 / CECT 9034 / ACN14a), this protein is Ribosomal RNA small subunit methyltransferase G.